A 202-amino-acid polypeptide reads, in one-letter code: Peptide deformylase (202 aa).

The disordered stretch occupies residues 1 to 24; that stretch reads MAGSFAQLAKNAEKKKPSISVSKE. Fe cation-binding residues include Cys-121 and His-163. Glu-164 is a catalytic residue. Residue His-167 coordinates Fe cation.

Belongs to the polypeptide deformylase family. Fe(2+) serves as cofactor.

The enzyme catalyses N-terminal N-formyl-L-methionyl-[peptide] + H2O = N-terminal L-methionyl-[peptide] + formate. Functionally, removes the formyl group from the N-terminal Met of newly synthesized proteins. Requires at least a dipeptide for an efficient rate of reaction. N-terminal L-methionine is a prerequisite for activity but the enzyme has broad specificity at other positions. The chain is Peptide deformylase from Prochlorococcus marinus (strain NATL2A).